Reading from the N-terminus, the 388-residue chain is ATP phosphoribosyltransferase regulatory subunit (388 aa).

This sequence belongs to the class-II aminoacyl-tRNA synthetase family. HisZ subfamily. In terms of assembly, heteromultimer composed of HisG and HisZ subunits.

It is found in the cytoplasm. Its pathway is amino-acid biosynthesis; L-histidine biosynthesis; L-histidine from 5-phospho-alpha-D-ribose 1-diphosphate: step 1/9. Functionally, required for the first step of histidine biosynthesis. May allow the feedback regulation of ATP phosphoribosyltransferase activity by histidine. The protein is ATP phosphoribosyltransferase regulatory subunit of Acinetobacter baylyi (strain ATCC 33305 / BD413 / ADP1).